Reading from the N-terminus, the 372-residue chain is Aminomethyltransferase (372 aa).

It belongs to the GcvT family. In terms of assembly, the glycine cleavage system is composed of four proteins: P, T, L and H.

It catalyses the reaction N(6)-[(R)-S(8)-aminomethyldihydrolipoyl]-L-lysyl-[protein] + (6S)-5,6,7,8-tetrahydrofolate = N(6)-[(R)-dihydrolipoyl]-L-lysyl-[protein] + (6R)-5,10-methylene-5,6,7,8-tetrahydrofolate + NH4(+). In terms of biological role, the glycine cleavage system catalyzes the degradation of glycine. In Synechococcus elongatus (strain ATCC 33912 / PCC 7942 / FACHB-805) (Anacystis nidulans R2), this protein is Aminomethyltransferase.